We begin with the raw amino-acid sequence, 388 residues long: Succinate--CoA ligase [ADP-forming] subunit beta (388 aa).

Residues 9 to 244 form the ATP-grasp domain; it reads KEILRKFGVA…LDEEDPAEIE (236 aa). Residues K46, 53–55, E99, A102, and E107 each bind ATP; that span reads GRG. Residues N199 and D213 each contribute to the Mg(2+) site. Substrate is bound by residues N264 and 321 to 323; that span reads GIM.

The protein belongs to the succinate/malate CoA ligase beta subunit family. In terms of assembly, heterotetramer of two alpha and two beta subunits. The cofactor is Mg(2+).

The catalysed reaction is succinate + ATP + CoA = succinyl-CoA + ADP + phosphate. The enzyme catalyses GTP + succinate + CoA = succinyl-CoA + GDP + phosphate. The protein operates within carbohydrate metabolism; tricarboxylic acid cycle; succinate from succinyl-CoA (ligase route): step 1/1. In terms of biological role, succinyl-CoA synthetase functions in the citric acid cycle (TCA), coupling the hydrolysis of succinyl-CoA to the synthesis of either ATP or GTP and thus represents the only step of substrate-level phosphorylation in the TCA. The beta subunit provides nucleotide specificity of the enzyme and binds the substrate succinate, while the binding sites for coenzyme A and phosphate are found in the alpha subunit. The protein is Succinate--CoA ligase [ADP-forming] subunit beta of Burkholderia multivorans (strain ATCC 17616 / 249).